The sequence spans 507 residues: Inactive alanine aminotransferase (507 aa).

Pyridoxal 5'-phosphate-binding residues include alanine 173, serine 174, tyrosine 199, asparagine 255, and serine 324. Position 327 is an N6-(pyridoxal phosphate)lysine (lysine 327). Residue arginine 336 participates in pyridoxal 5'-phosphate binding.

This sequence belongs to the class-I pyridoxal-phosphate-dependent aminotransferase family. Alanine aminotransferase subfamily. Homodimer. Pyridoxal 5'-phosphate is required as a cofactor.

The protein localises to the cytoplasm. It localises to the nucleus. Its function is as follows. Inactive alanine aminotransferase. Forms a catalytically active Schiff base with PLP, but lacks alanine transaminase activity, probably due to an altered structural conformation of the dimeric enzyme. This suggests this protein may have a yet undiscovered physiological function. The polypeptide is Inactive alanine aminotransferase (ALT2) (Saccharomyces cerevisiae (strain ATCC 204508 / S288c) (Baker's yeast)).